A 348-amino-acid polypeptide reads, in one-letter code: MNFPIAAESSLPQRKAEHLQLCLEAGVESPEVTTGLERYRFQHCALPNLSLQALDLGTQFLGRSLGAPLLISSMTGGTETAQRINCRLAIAAQKYRLAMGVGSQRVMLRQPETTPTFDVRDLAPDILLLANLGAVQLNYGVTPAEAQQLVDRLGADALILHLNPLQECIQAEGDTDFRGLLGRIGELCAALSVPVIVKEVGNGLSAMVAAQLLSAGVAALDVAGAGGTSWSRVEGQRAVDPLLRRLGDRFGDWGIPTAESLQQVRQVSATVPLIASGGIRHGLDAAKAIALGADLVGLARPFLVAADQSEEVLDQWITELLAELRIVRFCTDSGDWAALRRPGVLRPC.

14–15 (RK) lines the substrate pocket. FMN-binding positions include Ser72, 73 to 75 (SMT), Ser103, and Asn131. A substrate-binding site is contributed by 103–105 (SQR). Gln166 contacts substrate. Glu167 is a binding site for Mg(2+). FMN is bound by residues Lys198, Thr228, 278–280 (GIR), and 299–300 (AR).

Belongs to the IPP isomerase type 2 family. As to quaternary structure, homooctamer. Dimer of tetramers. It depends on FMN as a cofactor. NADPH is required as a cofactor. Mg(2+) serves as cofactor.

Its subcellular location is the cytoplasm. It carries out the reaction isopentenyl diphosphate = dimethylallyl diphosphate. Its function is as follows. Involved in the biosynthesis of isoprenoids. Catalyzes the 1,3-allylic rearrangement of the homoallylic substrate isopentenyl (IPP) to its allylic isomer, dimethylallyl diphosphate (DMAPP). The protein is Isopentenyl-diphosphate delta-isomerase of Synechococcus sp. (strain ATCC 27144 / PCC 6301 / SAUG 1402/1) (Anacystis nidulans).